A 100-amino-acid polypeptide reads, in one-letter code: Enhancer of yellow 2 transcription factor (100 aa).

It belongs to the ENY2 family. In terms of assembly, component of the nuclear pore complex (NPC)-associated AMEX complex (anchoring and mRNA export complex), composed of at least e(y)2 and xmas-2. Component of the SAGA transcription coactivator-HAT complexes, at least composed of Ada2b, e(y)2, Pcaf/Gcn5, Taf10 and Nipped-A/Trrap. Within the SAGA complex, e(y)2, Sgf11, and not/nonstop form an additional subcomplex of SAGA called the DUB module (deubiquitination module). Component of the THO complex, composed of at least e(y)2, HPR1, THO2, THOC5, THOC6 and THOC7. Interacts with e(y)1. Interacts with su(Hw) (via zinc fingers). Interacts with xmas-2; required for localization to the nuclear periphery. Interacts with the nuclear pore complex (NPC).

The protein localises to the nucleus. It localises to the nucleoplasm. It is found in the cytoplasm. In terms of biological role, involved in mRNA export coupled transcription activation by association with both the AMEX and the SAGA complexes. The SAGA complex is a multiprotein complex that activates transcription by remodeling chromatin and mediating histone acetylation and deubiquitination. Within the SAGA complex, participates in a subcomplex that specifically deubiquitinates histone H2B. The SAGA complex is recruited to specific gene promoters by activators, where it is required for transcription. Required for nuclear receptor-mediated transactivation. Involved in transcription elongation by recruiting the THO complex onto nascent mRNA. The AMEX complex functions in docking export-competent ribonucleoprotein particles (mRNPs) to the nuclear entrance of the nuclear pore complex (nuclear basket). AMEX participates in mRNA export and accurate chromatin positioning in the nucleus by tethering genes to the nuclear periphery. This Drosophila pseudoobscura pseudoobscura (Fruit fly) protein is Enhancer of yellow 2 transcription factor.